Reading from the N-terminus, the 500-residue chain is Proline/betaine transporter (500 aa).

At 1-37 (MLKRKKVKPITLRDVTIIDDGKLRKAITAASLGNAME) the chain is on the cytoplasmic side. The chain crosses the membrane as a helical span at residues 38-58 (WFDFGVYGFVAYALGKVFFPG). Topologically, residues 59–65 (ADPSVQM) are periplasmic. The helical transmembrane segment at 66-86 (VAALATFSVPFLIRPLGGLFF) threads the bilayer. Residues 87 to 97 (GMLGDKYGRQK) are Cytoplasmic-facing. A helical membrane pass occupies residues 98–118 (ILAITIVIMSISTFCIGLIPS). The Periplasmic segment spans residues 119–121 (YDT). The chain crosses the membrane as a helical span at residues 122–142 (IGIWAPILLLICKMAQGFSVG). At 143-169 (GEYTGASIFVAEYSPDRKRGFMGSWLD) the chain is on the cytoplasmic side. Residues 170 to 190 (FGSIAGFVLGAGVVVLISTIV) traverse the membrane as a helical segment. Residues 191 to 194 (GEAN) are Periplasmic-facing. Residues 195–215 (FLDWGWRIPFFIALPLGIIGL) form a helical membrane-spanning segment. The Cytoplasmic portion of the chain corresponds to 216–260 (YLRHALEETPAFQQHVDKLEQGDREGLQDGPKVSFKEIATKYWRS). A helical membrane pass occupies residues 261–281 (LLTCIGLVIATNVTYYMLLTY). At 282–297 (MPSYLSHNLHYSEDHG) the chain is on the periplasmic side. Residues 298–318 (VLIIIAIMIGMLFVQPVMGLL) traverse the membrane as a helical segment. Topologically, residues 319 to 325 (SDRFGRR) are cytoplasmic. Residues 326 to 346 (PFVLLGSVALFVLAIPAFILI) form a helical membrane-spanning segment. Over 347–350 (NSNV) the chain is Periplasmic. Residues 351-371 (IGLIFAGLLMLAVILNCFTGV) traverse the membrane as a helical segment. Topologically, residues 372–390 (MASTLPAMFPTHIRYSALA) are cytoplasmic. Residues 391 to 411 (AAFNISVLVAGLTPTLAAWLV) traverse the membrane as a helical segment. Topologically, residues 412–416 (ESSQN) are periplasmic. A helical membrane pass occupies residues 417 to 437 (LMMPAYYLMVVAVVGLITGVT). Residues 438-500 (MKETANRPLK…LVQQHPRIDE (63 aa)) are Cytoplasmic-facing. Positions 453-498 (ASDIQEAKEILVEHYDNIEQKIDDIDHEIADLQAKRTRLVQQHPRI) form a coiled coil.

It belongs to the major facilitator superfamily. Metabolite:H+ Symporter (MHS) family (TC 2.A.1.6) family.

The protein resides in the cell inner membrane. Proton symporter that senses osmotic shifts and responds by importing osmolytes such as proline, glycine betaine, stachydrine, pipecolic acid, ectoine and taurine. It is both an osmosensor and an osmoregulator which is available to participate early in the bacterial osmoregulatory response. The sequence is that of Proline/betaine transporter (proP) from Escherichia coli O157:H7.